We begin with the raw amino-acid sequence, 499 residues long: Probable cytosol aminopeptidase (499 aa).

Positions 271 and 276 each coordinate Mn(2+). Residue Lys283 is part of the active site. Asp294, Asp353, and Glu355 together coordinate Mn(2+). Arg357 is a catalytic residue.

It belongs to the peptidase M17 family. Mn(2+) serves as cofactor.

Its subcellular location is the cytoplasm. The enzyme catalyses Release of an N-terminal amino acid, Xaa-|-Yaa-, in which Xaa is preferably Leu, but may be other amino acids including Pro although not Arg or Lys, and Yaa may be Pro. Amino acid amides and methyl esters are also readily hydrolyzed, but rates on arylamides are exceedingly low.. It carries out the reaction Release of an N-terminal amino acid, preferentially leucine, but not glutamic or aspartic acids.. In terms of biological role, presumably involved in the processing and regular turnover of intracellular proteins. Catalyzes the removal of unsubstituted N-terminal amino acids from various peptides. This is Probable cytosol aminopeptidase from Bordetella bronchiseptica (strain ATCC BAA-588 / NCTC 13252 / RB50) (Alcaligenes bronchisepticus).